Reading from the N-terminus, the 1621-residue chain is Nestin (1621 aa).

Met-1 bears the N-acetylmethionine mark. The head stretch occupies residues 1 to 7; it reads MEGCMGE. Positions 8–43 are coil 1A; the sequence is ESFQMWELNRRLEAYLARVKALEEQNELLSAELGGL. The IF rod domain occupies 8-313; that stretch reads ESFQMWELNR…TLLEAENSRL (306 aa). The segment at 44 to 55 is linker 1; it reads RAQSADTSWRAH. The interval 56-151 is coil 1B; the sequence is ADDELAALRA…VAHEEERVGL (96 aa). The interval 152 to 173 is linker 12; that stretch reads NAQAACAPRCPAPPRGPPAPAP. The segment at 174-192 is coil 2A; that stretch reads EVEELARRLGEAWRGAVRG. The segment at 193–195 is linker 2; the sequence is YQE. Positions 196–313 are coil 2B; sequence RVAHMETSLG…TLLEAENSRL (118 aa). A Phosphoserine modification is found at Ser-311. Positions 314 to 1621 are tail; the sequence is QTPGGGSKTS…DRESWSSGED (1308 aa). Thr-315 is modified (phosphothreonine). Ser-325 carries the post-translational modification Phosphoserine. Position 338 is a phosphothreonine (Thr-338). Phosphoserine is present on residues Ser-355 and Ser-358. Thr-388 is subject to Phosphothreonine. 12 positions are modified to phosphoserine: Ser-398, Ser-471, Ser-476, Ser-548, Ser-564, Ser-578, Ser-588, Ser-638, Ser-680, Ser-702, Ser-746, and Ser-768. Residues 439–490 are disordered; sequence SVLPGPEEPGGQRQEASTGQSPEDHASLAPPLSPDHSSLEAKDGESGGSRVF. A disordered region spans residues 670-788; it reads LEKENQEPLR…PPEKVDLEPL (119 aa). Composition is skewed to basic and acidic residues over residues 687–725, 736–770, and 779–788; these read EALR…LKTL, LETE…RSLG, and PPEKVDLEPL. At Ser-790 the chain carries Phosphoserine. Residue Lys-811 forms a Glycyl lysine isopeptide (Lys-Gly) (interchain with G-Cter in SUMO1); alternate linkage. Lys-811 is covalently cross-linked (Glycyl lysine isopeptide (Lys-Gly) (interchain with G-Cter in SUMO2); alternate). Residues Ser-820, Ser-831, and Ser-842 each carry the phosphoserine modification. The residue at position 851 (Thr-851) is a Phosphothreonine. Ser-894, Ser-905, Ser-913, and Ser-934 each carry phosphoserine. Residues 895-1593 form a disordered region; that stretch reads LGAWNLENLR…GSALKTSWAG (699 aa). Basic and acidic residues-rich tracts occupy residues 904–936, 949–960, 980–994, and 1012–1024; these read RSPE…RSLE, QRWEDTVEKDQE, LNLR…KEEV, and GHPE…EQRG. Ser-1016 bears the Phosphoserine mark. The span at 1085-1098 shows a compositional bias: low complexity; it reads GSEPAMGESAAGAE. The segment covering 1099–1110 has biased composition (gly residues); sequence PGPGQGVGGLGD. Basic and acidic residues-rich tracts occupy residues 1129–1145 and 1159–1184; these read LEAK…KDLE and GKSR…RGAE. Ser-1261, Ser-1282, Ser-1286, Ser-1310, Ser-1347, Ser-1409, Ser-1418, and Ser-1452 each carry phosphoserine. Over residues 1275 to 1292 the composition is skewed to acidic residues; sequence PQEEGEESREESEEDELG. Residues 1409-1428 are compositionally biased toward acidic residues; the sequence is SDGFADEEESGEEGEEDQEE. 2 stretches are compositionally biased toward low complexity: residues 1440-1453 and 1460-1470; these read GSSV…SSSQ and SDSVSVSVPWD. Over residues 1486 to 1495 the composition is skewed to polar residues; it reads ETESQDSAEP. Phosphoserine is present on residues Ser-1496, Ser-1498, Ser-1577, Ser-1617, and Ser-1618.

The protein belongs to the intermediate filament family. Forms homodimers and homotetramers in vitro. In mixtures with other intermediate filament proteins such as vimentin and alpha-internexin, tis protein preferentially forms heterodimers which can assemble to form intermediate filaments if nestin does not exceed 25%. Interacts with FHOD3. In terms of processing, constitutively phosphorylated. This increases during mitosis when the cytoplasmic intermediate filament network is reorganized. As to expression, CNS stem cells.

Required for brain and eye development. Promotes the disassembly of phosphorylated vimentin intermediate filaments (IF) during mitosis and may play a role in the trafficking and distribution of IF proteins and other cellular factors to daughter cells during progenitor cell division. Required for survival, renewal and mitogen-stimulated proliferation of neural progenitor cells. The sequence is that of Nestin (NES) from Homo sapiens (Human).